A 914-amino-acid polypeptide reads, in one-letter code: Protein translocase subunit SecA (914 aa).

Residues Gln-87, 105–109, and Asp-500 contribute to the ATP site; that span reads GEGKT. 4 residues coordinate Zn(2+): Cys-898, Cys-900, Cys-909, and His-910.

Belongs to the SecA family. Monomer and homodimer. Part of the essential Sec protein translocation apparatus which comprises SecA, SecYEG and auxiliary proteins SecDF-YajC and YidC. Zn(2+) is required as a cofactor.

The protein resides in the cell inner membrane. It is found in the cytoplasm. The catalysed reaction is ATP + H2O + cellular proteinSide 1 = ADP + phosphate + cellular proteinSide 2.. Its function is as follows. Part of the Sec protein translocase complex. Interacts with the SecYEG preprotein conducting channel. Has a central role in coupling the hydrolysis of ATP to the transfer of proteins into and across the cell membrane, serving as an ATP-driven molecular motor driving the stepwise translocation of polypeptide chains across the membrane. The protein is Protein translocase subunit SecA of Acidithiobacillus ferrooxidans (strain ATCC 23270 / DSM 14882 / CIP 104768 / NCIMB 8455) (Ferrobacillus ferrooxidans (strain ATCC 23270)).